We begin with the raw amino-acid sequence, 241 residues long: Uridylate kinase (241 aa).

Residue 12 to 15 (KLSG) coordinates ATP. Residues 20–25 (GDKGTG) form an involved in allosteric activation by GTP region. G54 serves as a coordination point for UMP. Positions 55 and 59 each coordinate ATP. UMP is bound by residues D74 and 135–142 (TGSPYFST). ATP is bound by residues N163, Y169, and D172.

This sequence belongs to the UMP kinase family. As to quaternary structure, homohexamer.

Its subcellular location is the cytoplasm. The enzyme catalyses UMP + ATP = UDP + ADP. Its pathway is pyrimidine metabolism; CTP biosynthesis via de novo pathway; UDP from UMP (UMPK route): step 1/1. Its activity is regulated as follows. Allosterically activated by GTP. Inhibited by UTP. Functionally, catalyzes the reversible phosphorylation of UMP to UDP. This Pediococcus pentosaceus (strain ATCC 25745 / CCUG 21536 / LMG 10740 / 183-1w) protein is Uridylate kinase.